We begin with the raw amino-acid sequence, 213 residues long: Probable transaldolase (213 aa).

The active-site Schiff-base intermediate with substrate is the K83.

This sequence belongs to the transaldolase family. Type 3B subfamily.

Its subcellular location is the cytoplasm. It catalyses the reaction D-sedoheptulose 7-phosphate + D-glyceraldehyde 3-phosphate = D-erythrose 4-phosphate + beta-D-fructose 6-phosphate. Its pathway is carbohydrate degradation; pentose phosphate pathway; D-glyceraldehyde 3-phosphate and beta-D-fructose 6-phosphate from D-ribose 5-phosphate and D-xylulose 5-phosphate (non-oxidative stage): step 2/3. Transaldolase is important for the balance of metabolites in the pentose-phosphate pathway. The polypeptide is Probable transaldolase (Geobacillus kaustophilus (strain HTA426)).